Reading from the N-terminus, the 186-residue chain is Homeobox expressed in ES cells 1 (186 aa).

A DNA-binding region (homeobox) is located at residues 109–168 (GRRPRTAFTRSQIEILENVFRVNSYPGIDIREELAGKLALDEDRIQIWFQNRRAKLKRSH).

The protein belongs to the ANF homeobox family. Interacts (via N-terminus) with zyx.

It localises to the nucleus. Its function is as follows. Regulates the earliest stages of development of the anterior neural plate. Plays a role in forebrain development by inhibiting the expression of otx2 and pax6 in the rostral region of the anterior neural plate. Necessary for both neural differentiation and neural patterning. Controls Spemann organizer development. May act as a transcriptional repressor. This Xenopus tropicalis (Western clawed frog) protein is Homeobox expressed in ES cells 1.